We begin with the raw amino-acid sequence, 387 residues long: Phosphoglycerate kinase (387 aa).

Substrate contacts are provided by residues 21–23, Arg36, 59–62, Arg113, and Arg146; these read DLN and HLGR. Residues Lys197, Glu314, and 340-343 each bind ATP; that span reads GGDT.

This sequence belongs to the phosphoglycerate kinase family. In terms of assembly, monomer.

The protein resides in the cytoplasm. It carries out the reaction (2R)-3-phosphoglycerate + ATP = (2R)-3-phospho-glyceroyl phosphate + ADP. It participates in carbohydrate degradation; glycolysis; pyruvate from D-glyceraldehyde 3-phosphate: step 2/5. This is Phosphoglycerate kinase from Photorhabdus laumondii subsp. laumondii (strain DSM 15139 / CIP 105565 / TT01) (Photorhabdus luminescens subsp. laumondii).